Here is a 189-residue protein sequence, read N- to C-terminus: Peptidyl-tRNA hydrolase (189 aa).

Residue Tyr15 coordinates tRNA. Residue His20 is the Proton acceptor of the active site. TRNA-binding residues include Phe66, Asn68, and Asn114.

This sequence belongs to the PTH family. As to quaternary structure, monomer.

It localises to the cytoplasm. It carries out the reaction an N-acyl-L-alpha-aminoacyl-tRNA + H2O = an N-acyl-L-amino acid + a tRNA + H(+). Hydrolyzes ribosome-free peptidyl-tRNAs (with 1 or more amino acids incorporated), which drop off the ribosome during protein synthesis, or as a result of ribosome stalling. Functionally, catalyzes the release of premature peptidyl moieties from peptidyl-tRNA molecules trapped in stalled 50S ribosomal subunits, and thus maintains levels of free tRNAs and 50S ribosomes. This is Peptidyl-tRNA hydrolase from Streptococcus pneumoniae (strain CGSP14).